Consider the following 518-residue polypeptide: Probable glycosyltransferase At5g03795 (518 aa).

Residues 1-25 (MGDEDVDGKCKNMSACSSTTSYSTK) lie on the Cytoplasmic side of the membrane. The helical; Signal-anchor for type II membrane protein transmembrane segment at 26–46 (LFLFMVPLVVISGFVFVNIGP) threads the bilayer. Residues 47-518 (KDSTSLLTSL…RRLNVKIREV (472 aa)) are Lumenal-facing. Residues asparagine 104, asparagine 113, asparagine 120, asparagine 282, and asparagine 320 are each glycosylated (N-linked (GlcNAc...) asparagine).

This sequence belongs to the glycosyltransferase 47 family.

Its subcellular location is the golgi apparatus membrane. In terms of biological role, may be involved in cell wall biosynthesis. The polypeptide is Probable glycosyltransferase At5g03795 (Arabidopsis thaliana (Mouse-ear cress)).